The primary structure comprises 311 residues: Ribosomal RNA small subunit methyltransferase H (311 aa).

Residues 32–34 (AGH), Asp-52, Phe-79, Asp-100, and Gln-107 contribute to the S-adenosyl-L-methionine site.

It belongs to the methyltransferase superfamily. RsmH family.

The protein localises to the cytoplasm. It catalyses the reaction cytidine(1402) in 16S rRNA + S-adenosyl-L-methionine = N(4)-methylcytidine(1402) in 16S rRNA + S-adenosyl-L-homocysteine + H(+). In terms of biological role, specifically methylates the N4 position of cytidine in position 1402 (C1402) of 16S rRNA. The sequence is that of Ribosomal RNA small subunit methyltransferase H from Staphylococcus aureus (strain Mu3 / ATCC 700698).